A 352-amino-acid chain; its full sequence is Dysbindin (352 aa).

A Phosphoserine modification is found at Ser11. The stretch at 92-180 forms a coiled coil; it reads TSLAELQEQL…AELDTEHAQK (89 aa). The short motif at 243-256 is the Nuclear export signal element; the sequence is LMDLSDQEALDVFL. The disordered stretch occupies residues 267–352; it reads SPGLEMESNP…SDQCDSTQDI (86 aa). Residues 274-285 are compositionally biased toward polar residues; that stretch reads SNPSQNEMNLQI. Low complexity predominate over residues 286–301; that stretch reads PNPSESASQPPASPSA. A phosphoserine mark is found at Ser340 and Ser343.

Belongs to the dysbindin family. In terms of assembly, interacts (via its coiled coil domain) with KXD1. Interacts with AP3B2, TRIM32, CMYA5, PI4K2 and RNF151. Interacts with the DNA-dependent protein kinase complex DNA-PK; the interaction phosphorylates DTNBP1 in vitro. Interacts directly in this complex with XRCC5 and XRCC6. Interacts with XPO1; the interaction exports DTNBP1 out of the nucleus. Component of the biogenesis of lysosome-related organelles complex 1 (BLOC-1) composed of at least BLOC1S1, BLOC1S2, BLOC1S3, BLOC1S4, BLOC1S5, BLOC1S6, DTNBP1/BLOC1S7 and SNAPIN/BLOC1S8. Interacts directly in the complex with BLOC1S5, BLOC1S6 and SNAPIN/BLOC1S8. The BLOC-1 complex associates with the AP-3 protein complex and membrane protein cargos. This BLOC-1 complex also associates with the BLOC-2 complex in endosomes. Binds to DTNA and DTNB but may not be a physiological binding partner. Interacts with AP3M1. Ubiquitinated by TRIM32. Ubiquitination leads to DTNBP1 degradation. Detected in hippocampus neurons (at protein level). Ubiquitously expressed. The highest expression is observed in testis, liver, kidney, brain, heart and lung. In the brain, found primarily in axon bundles and axon terminals, notably in the cerebellum and hippocampus. Expressed at lower levels in stomach, small intestine and skeletal muscle, where it is detected at the sarcolemma.

It is found in the cytoplasm. The protein localises to the cytoplasmic vesicle membrane. Its subcellular location is the cytoplasmic vesicle. It localises to the secretory vesicle. The protein resides in the synaptic vesicle membrane. It is found in the endosome membrane. The protein localises to the melanosome membrane. Its subcellular location is the nucleus. It localises to the postsynaptic density. The protein resides in the presynaptic cell membrane. It is found in the endoplasmic reticulum. Component of the BLOC-1 complex, a complex that is required for normal biogenesis of lysosome-related organelles (LRO), such as platelet dense granules and melanosomes. In concert with the AP-3 complex, the BLOC-1 complex is required to target membrane protein cargos into vesicles assembled at cell bodies for delivery into neurites and nerve terminals. The BLOC-1 complex, in association with SNARE proteins, is also proposed to be involved in neurite extension. Associates with the BLOC-2 complex to facilitate the transport of TYRP1 independent of AP-3 function. Plays a role in synaptic vesicle trafficking and in neurotransmitter release. Plays a role in the regulation of cell surface exposure of DRD2. May play a role in actin cytoskeleton reorganization and neurite outgrowth. May modulate MAPK8 phosphorylation. Appears to promote neuronal transmission and viability through regulating the expression of SNAP25 and SYN1, modulating PI3-kinase-Akt signaling and influencing glutamatergic release. Regulates the expression of SYN1 through binding to its promoter. Modulates prefrontal cortical activity via the dopamine/D2 pathway. The chain is Dysbindin (Dtnbp1) from Rattus norvegicus (Rat).